We begin with the raw amino-acid sequence, 144 residues long: Large ribosomal subunit protein uL13 (144 aa).

The protein belongs to the universal ribosomal protein uL13 family. In terms of assembly, part of the 50S ribosomal subunit.

Its function is as follows. This protein is one of the early assembly proteins of the 50S ribosomal subunit, although it is not seen to bind rRNA by itself. It is important during the early stages of 50S assembly. The sequence is that of Large ribosomal subunit protein uL13 from Mesomycoplasma hyopneumoniae (strain 232) (Mycoplasma hyopneumoniae).